Consider the following 310-residue polypeptide: MFHHVTVLLEETVDQLNIDPNGIYVDCTLGGAGHSLYLVKQLQEGHLISIDQDQTAIDNAHIILKDYLDKVTFVKDNFRNLSDILAHLDIQKVDGILYDLGVSSPQLDVGERGFSYHQEAKLDMRMDQTQTLSAYEVVNTWPYEKLVSIFFRYGEEKFSKQIARKIEAERELKPIETTTELVEIIKAAIPAPARRTGGHPAKRVFQAIRIAVNDELGAFESSIEQAIDSVKPGGRISVITFHSLEDRLCKQVFQEYSKGPDIPRGLPVVPPEYQPKLKKITRKPITSSNEELEHNNRARSAKLRVVEILK.

S-adenosyl-L-methionine is bound by residues 32–34 (AGH), Asp-51, Phe-78, Asp-99, and Gln-106.

This sequence belongs to the methyltransferase superfamily. RsmH family.

Its subcellular location is the cytoplasm. It catalyses the reaction cytidine(1402) in 16S rRNA + S-adenosyl-L-methionine = N(4)-methylcytidine(1402) in 16S rRNA + S-adenosyl-L-homocysteine + H(+). Its function is as follows. Specifically methylates the N4 position of cytidine in position 1402 (C1402) of 16S rRNA. This Macrococcus caseolyticus (strain JCSC5402) (Macrococcoides caseolyticum) protein is Ribosomal RNA small subunit methyltransferase H.